A 239-amino-acid polypeptide reads, in one-letter code: Cysteine-rich venom protein kaouthin-1 (239 aa).

The first 18 residues, 1 to 18 (MIAFSLLCLAAVLRQSFG), serve as a signal peptide directing secretion. The SCP domain maps to 37–165 (VDLHNSLRRR…AWSYFYVCQY (129 aa)). 8 disulfides stabilise this stretch: C74–C152, C91–C166, C147–C163, C185–C192, C188–C197, C201–C234, C210–C228, and C219–C232. The ShKT domain occupies 201-234 (CTIYNKLTNCDSLLKQGSCQDDWIKSNCPASCFC).

This sequence belongs to the CRISP family. As to expression, expressed by the venom gland.

The protein localises to the secreted. Its function is as follows. Inhibits calcium-activated potassium channels (KCa), voltage-gated potassium channel (Kv), and the calcium release channel/ryanodine receptor (RyR). In Naja kaouthia (Monocled cobra), this protein is Cysteine-rich venom protein kaouthin-1.